A 145-amino-acid chain; its full sequence is D-aminoacyl-tRNA deacylase (145 aa).

A Gly-cisPro motif, important for rejection of L-amino acids motif is present at residues glycine 137–proline 138.

The protein belongs to the DTD family. As to quaternary structure, homodimer.

The protein localises to the cytoplasm. The enzyme catalyses glycyl-tRNA(Ala) + H2O = tRNA(Ala) + glycine + H(+). It carries out the reaction a D-aminoacyl-tRNA + H2O = a tRNA + a D-alpha-amino acid + H(+). Its function is as follows. An aminoacyl-tRNA editing enzyme that deacylates mischarged D-aminoacyl-tRNAs. Also deacylates mischarged glycyl-tRNA(Ala), protecting cells against glycine mischarging by AlaRS. Acts via tRNA-based rather than protein-based catalysis; rejects L-amino acids rather than detecting D-amino acids in the active site. By recycling D-aminoacyl-tRNA to D-amino acids and free tRNA molecules, this enzyme counteracts the toxicity associated with the formation of D-aminoacyl-tRNA entities in vivo and helps enforce protein L-homochirality. This is D-aminoacyl-tRNA deacylase from Pseudomonas putida (strain W619).